The chain runs to 1111 residues: Lysylphosphatidylglycerol biosynthesis bifunctional protein LysX (1111 aa).

Residues 1–612 (MTLTSPPRTR…VLHHDGTAPD (612 aa)) are phosphatidylglycerol lysyltransferase. Helical transmembrane passes span 18-38 (VPAAAGWTVGVIATLSLIASV), 60-80 (FPDTSFAWAFVLALLAGALAA), 84-104 (IAWWILLLYMVAAVGWNVADL), 118-138 (VIGLAFHLAAVAFLLLARPLF), 152-172 (GVLAAGMAVGVLVGWGLLELF), 209-229 (VNALLGLFGALALMAAAIVLF), and 308-328 (AWLALCGTYGWAPGVMGASVG). Residues 613–1111 (MSGLRTDTAD…TLPFPLARPR (499 aa)) are lysine--tRNA ligase. The OB DNA-binding region spans 674–747 (VAGRVLRIRD…GTRSLLVRHW (74 aa)). 2 residues coordinate Mg(2+): D1023 and E1030.

The protein in the N-terminal section; belongs to the LPG synthetase family. In the C-terminal section; belongs to the class-II aminoacyl-tRNA synthetase family. Mg(2+) serves as cofactor.

The protein localises to the cell membrane. It catalyses the reaction tRNA(Lys) + L-lysine + ATP = L-lysyl-tRNA(Lys) + AMP + diphosphate. The enzyme catalyses L-lysyl-tRNA(Lys) + a 1,2-diacyl-sn-glycero-3-phospho-(1'-sn-glycerol) = a 1,2-diacyl-sn-glycero-3-phospho-1'-(3'-O-L-lysyl)-sn-glycerol + tRNA(Lys). Its function is as follows. Catalyzes the production of L-lysyl-tRNA(Lys)transfer and the transfer of a lysyl group from L-lysyl-tRNA(Lys) to membrane-bound phosphatidylglycerol (PG), which produces lysylphosphatidylglycerol (LPG), one of the components of the bacterial membrane with a positive net charge. LPG synthesis contributes to the resistance to cationic antimicrobial peptides (CAMPs) and likely protects M.tuberculosis against the CAMPs produced by competiting microorganisms (bacteriocins). In fact, the modification of anionic phosphatidylglycerol with positively charged L-lysine results in repulsion of the peptides. This Mycobacterium sp. (strain JLS) protein is Lysylphosphatidylglycerol biosynthesis bifunctional protein LysX (lysX).